Here is a 5101-residue protein sequence, read N- to C-terminus: Malformin synthetase mlfA (5101 aa).

The tract at residues 225 to 616 (ERHAANRPHS…CGRADTQVKL (392 aa)) is adenylation 1. Residues 757 to 830 (SRLEQKIQLA…EAASLAEVQE (74 aa)) enclose the Carrier 1 domain. Ser-791 is modified (O-(pantetheine 4'-phosphoryl)serine). Residues 868–1299 (EDVFPCTTMQ…ALNTLSLLQA (432 aa)) are condensation 1. The segment at 1327–1716 (DRWVTRQPEG…GRKDTQVKLR (390 aa)) is adenylation 2. Residues 1854-1931 (TPTLELERTL…QLAAEVGEPA (78 aa)) enclose the Carrier 2 domain. Ser-1891 bears the O-(pantetheine 4'-phosphoryl)serine mark. 2 disordered regions span residues 1932-1961 (GQSA…DGVD) and 1994-2020 (GGSS…KKNA). Low complexity-rich tracts occupy residues 1934 to 1958 (SASS…STND) and 1996 to 2013 (SSSN…SSSS). Residues 2066–2481 (EDIYPATALQ…AVSCSDKETL (416 aa)) are condensation 2. An adenylation 3 region spans residues 2504-2896 (RRTPHAPAVC…IGRRDGQLKL (393 aa)). The Carrier 3 domain maps to 3032 to 3108 (RPVTSQEHEM…QLICHLNTIR (77 aa)). The residue at position 3069 (Ser-3069) is an O-(pantetheine 4'-phosphoryl)serine. Condensation stretches follow at residues 3125 to 3590 (WVAL…TYDQ) and 3611 to 4030 (NIYP…EHLV). The adenylation 4 stretch occupies residues 4055 to 4445 (HNSRQAVCAW…VGRKDNQIKF (391 aa)). Residues 4579–4655 (MPSTAAERKM…DLSDQAKSLI (77 aa)) enclose the Carrier 4 domain. At Ser-4616 the chain carries O-(pantetheine 4'-phosphoryl)serine. The tract at residues 4712–5097 (IVVDIPGPID…KIVGLLRHPE (386 aa)) is condensation 5.

It belongs to the NRP synthetase family.

It participates in secondary metabolite biosynthesis. Nonribosomal peptide synthetase; part of the gene cluster that mediates the biosynthesis of malformins, cyclic pentapeptides with a disulfide bond between 2 consecutive cysteins, that show potential anti-tumor as well as antimalarial and antitrypanosomal properties. The nonribosomal peptide synthetase mlfA is responsible of the formation of the cyclic pentapeptide. The malformin biosynthesis clusters in malformin-producing fungi also contain enzymes involved in the formation of the disulfide bond between the two consecutive cysteins within malformins, in addition to additional tailoring enzymes such as methyltransferases or oxidoreductases. They are also composed of up to 4 major facilitator superfamily transporters, and transcription factors probably involved in the regulation of the expression of those clusters. This Aspergillus kawachii (strain NBRC 4308) (White koji mold) protein is Malformin synthetase mlfA.